We begin with the raw amino-acid sequence, 194 residues long: Protein GrpE (194 aa).

Belongs to the GrpE family. In terms of assembly, homodimer.

It localises to the cytoplasm. Participates actively in the response to hyperosmotic and heat shock by preventing the aggregation of stress-denatured proteins, in association with DnaK and GrpE. It is the nucleotide exchange factor for DnaK and may function as a thermosensor. Unfolded proteins bind initially to DnaJ; upon interaction with the DnaJ-bound protein, DnaK hydrolyzes its bound ATP, resulting in the formation of a stable complex. GrpE releases ADP from DnaK; ATP binding to DnaK triggers the release of the substrate protein, thus completing the reaction cycle. Several rounds of ATP-dependent interactions between DnaJ, DnaK and GrpE are required for fully efficient folding. This chain is Protein GrpE, found in Aliivibrio fischeri (strain ATCC 700601 / ES114) (Vibrio fischeri).